Here is a 111-residue protein sequence, read N- to C-terminus: UPF0145 protein BMA10229_A0446 (111 aa).

The protein belongs to the UPF0145 family.

The chain is UPF0145 protein BMA10229_A0446 from Burkholderia mallei (strain NCTC 10229).